We begin with the raw amino-acid sequence, 369 residues long: Superinfection exclusion protein (369 aa).

The first 15 residues, 1 to 15 (MIALLILSLTCSVST), serve as a signal peptide directing secretion.

Belongs to the serpin family. Orthopoxvirus OPG040 subfamily. As to quaternary structure, interacts with A56 protein.

The protein resides in the virion membrane. It localises to the host cell membrane. Functionally, prevents cell to cell fusion via its interaction with A56 protein. The A56-K2 complex associates with components of the entry fusion complex (EFC) presumably to avoid superinfection and syncytium formation. This Vaccinia virus (strain Copenhagen) (VACV) protein is Superinfection exclusion protein (OPG040).